Reading from the N-terminus, the 90-residue chain is UPF0367 protein Npun_R4552 (90 aa).

The protein belongs to the UPF0367 family.

The protein is UPF0367 protein Npun_R4552 of Nostoc punctiforme (strain ATCC 29133 / PCC 73102).